A 693-amino-acid polypeptide reads, in one-letter code: Elongation factor G (693 aa).

In terms of domain architecture, tr-type G spans glutamate 8 to isoleucine 282. Residues alanine 17–threonine 24, aspartate 81–histidine 85, and asparagine 135–aspartate 138 contribute to the GTP site.

This sequence belongs to the TRAFAC class translation factor GTPase superfamily. Classic translation factor GTPase family. EF-G/EF-2 subfamily.

Its subcellular location is the cytoplasm. In terms of biological role, catalyzes the GTP-dependent ribosomal translocation step during translation elongation. During this step, the ribosome changes from the pre-translocational (PRE) to the post-translocational (POST) state as the newly formed A-site-bound peptidyl-tRNA and P-site-bound deacylated tRNA move to the P and E sites, respectively. Catalyzes the coordinated movement of the two tRNA molecules, the mRNA and conformational changes in the ribosome. In Mycoplasmoides gallisepticum (strain R(low / passage 15 / clone 2)) (Mycoplasma gallisepticum), this protein is Elongation factor G.